The following is a 210-amino-acid chain: MTTIYISSKQAHNFDDYTINKIGVPSSVLMERAALAVCQRLLESRNFNLKKVLVVAGIGNNGGDGIAVARMLYLKQVPVKIYLLGDREKISKDSRIQLKIAENYGVPFVSNIDDLSSYTTIVDAVFGVGLSRDVTGEIAGIVDFINNSPASVMAVDMPTGLNADNGNIMGTAVKAAETVTMSYNKLGLISETGRKFAGVVTVADIGIYEP.

In terms of domain architecture, YjeF N-terminal spans 11–210 (AHNFDDYTIN…TVADIGIYEP (200 aa)). Position 60–64 (60–64 (NNGGD)) interacts with (6S)-NADPHX. The K(+) site is built by Asn61 and Asp123. (6S)-NADPHX-binding positions include 127-133 (GVGLSRD) and Asp156. Residue Thr159 coordinates K(+).

The protein belongs to the NnrE/AIBP family. It depends on K(+) as a cofactor.

It carries out the reaction (6R)-NADHX = (6S)-NADHX. The catalysed reaction is (6R)-NADPHX = (6S)-NADPHX. Catalyzes the epimerization of the S- and R-forms of NAD(P)HX, a damaged form of NAD(P)H that is a result of enzymatic or heat-dependent hydration. This is a prerequisite for the S-specific NAD(P)H-hydrate dehydratase to allow the repair of both epimers of NAD(P)HX. The protein is NAD(P)H-hydrate epimerase of Oenococcus oeni (strain ATCC BAA-331 / PSU-1).